Reading from the N-terminus, the 344-residue chain is Hypoxia-inducible factor 1-alpha inhibitor (344 aa).

The residue at position 2 (Ala2) is an N-acetylalanine. The 171-residue stretch at 133 to 303 folds into the JmjC domain; that stretch reads GRVYLQQTLN…PKRIEYPLKA (171 aa). Tyr136 is a 2-oxoglutarate binding site. Residues Asp143 and 173-174 each bind substrate; that span reads LT. Thr187 contributes to the 2-oxoglutarate binding site. Residues His190 and Asp192 each coordinate Fe cation. 192–194 is a substrate binding site; sequence DEQ. The 2-oxoglutarate site is built by Asn196 and Lys205. 229 to 230 lines the substrate pocket; it reads RQ. His270 lines the Fe cation pocket. Position 285 (Asn285) interacts with 2-oxoglutarate. Substrate is bound by residues Ala291 and Asn312.

Homodimer; homodimerization is essential for catalytic activity. Fe(2+) is required as a cofactor.

It localises to the nucleus. It is found in the cytoplasm. The protein resides in the perinuclear region. It catalyses the reaction L-asparaginyl-[hypoxia-inducible factor alpha subunit] + 2-oxoglutarate + O2 = (3S)-3-hydroxy-L-asparaginyl-[hypoxia-inducible factor alpha subunit] + succinate + CO2. It carries out the reaction L-histidyl-[ankyrin-repeat domain protein] + 2-oxoglutarate + O2 = (3S)-3-hydroxy-L-histidyl-[ankyrin-repeat domain protein] + succinate + CO2. The enzyme catalyses L-asparaginyl-[ankyrin-repeat domain protein] + 2-oxoglutarate + O2 = (3S)-3-hydroxy-L-asparaginyl-[ankyrin-repeat domain protein] + succinate + CO2. The catalysed reaction is L-aspartyl-[ankyrin-repeat domain protein] + 2-oxoglutarate + O2 = (3S)-3-hydroxy-L-aspartyl-[ankyrin-repeat domain protein] + succinate + CO2. Functionally, hydroxylates a specific Asn residue in the C-terminal transactivation domain (CAD) of HIF-1 alpha. The hydroxylation prevents interaction of HIF-1 with transcriptional coactivators. Also hydroxylates specific Asn, Asp and His residues within ankyrin repeat domain-containing proteins. The chain is Hypoxia-inducible factor 1-alpha inhibitor (hif1an) from Danio rerio (Zebrafish).